A 511-amino-acid polypeptide reads, in one-letter code: GMP synthase [glutamine-hydrolyzing] (511 aa).

Residues 5 to 195 (PIVVLDFGSQ…AKHICGCEST (191 aa)) form the Glutamine amidotransferase type-1 domain. The Nucleophile role is filled by C82. Active-site residues include H169 and E171. The GMPS ATP-PPase domain maps to 196 to 386 (WNMGSFAKEQ…LGLPKSMISR (191 aa)). 223–229 (SGGVDSS) is a binding site for ATP.

In terms of assembly, homodimer.

The enzyme catalyses XMP + L-glutamine + ATP + H2O = GMP + L-glutamate + AMP + diphosphate + 2 H(+). It functions in the pathway purine metabolism; GMP biosynthesis; GMP from XMP (L-Gln route): step 1/1. Functionally, catalyzes the synthesis of GMP from XMP. This chain is GMP synthase [glutamine-hydrolyzing], found in Aliarcobacter butzleri (strain RM4018) (Arcobacter butzleri).